The chain runs to 437 residues: Adenylosuccinate synthetase (437 aa).

Residues 12–18 (GDEGKGK) and 40–42 (GHT) contribute to the GTP site. The Proton acceptor role is filled by Asp13. Residues Asp13 and Gly40 each contribute to the Mg(2+) site. IMP contacts are provided by residues 13-16 (DEGK), 38-41 (NAGH), Thr131, Arg145, Gln226, Thr241, and Arg305. His41 acts as the Proton donor in catalysis. A substrate-binding site is contributed by 301–307 (ATTGRRR). GTP-binding positions include Arg307, 333-335 (KLD), and 415-417 (SVG).

This sequence belongs to the adenylosuccinate synthetase family. In terms of assembly, homodimer. Requires Mg(2+) as cofactor.

Its subcellular location is the cytoplasm. It catalyses the reaction IMP + L-aspartate + GTP = N(6)-(1,2-dicarboxyethyl)-AMP + GDP + phosphate + 2 H(+). It participates in purine metabolism; AMP biosynthesis via de novo pathway; AMP from IMP: step 1/2. Functionally, plays an important role in the de novo pathway of purine nucleotide biosynthesis. Catalyzes the first committed step in the biosynthesis of AMP from IMP. The sequence is that of Adenylosuccinate synthetase from Desulfotalea psychrophila (strain LSv54 / DSM 12343).